The sequence spans 90 residues: Small ribosomal subunit protein bS16 (90 aa).

It belongs to the bacterial ribosomal protein bS16 family.

The chain is Small ribosomal subunit protein bS16 from Bacillus cytotoxicus (strain DSM 22905 / CIP 110041 / 391-98 / NVH 391-98).